The primary structure comprises 372 residues: MLCFVRFQAGFVRIIVAARKRFRYFLMAAEDRSEELSSNVENGSCNSNEGINPETSSHWIENVVKVRKPYTVTKQREKWSEEEHDRFLEAIKLYGRGWRQIQEHIGTKTAVQIRSHAQKFFSKMAQEADSRSEGSVKAIVIPPPRPKRKPAHPYPRKSPVPYTQSPPPNLSAMEKGTKSPTSVLSSFGSEDQVNRCSSPNSCTSDIQSIGATSIDKKNNYTTSKQPFKDDSDIGSTPISSITLFGKIVLVAEESHKPSSYNDDDLKQMTCQENHYSGMLVDTNLSLGVWETFCTGSNAFGSVTEASENLEKSAEPISSSWKRLSSLEKQGSCNPVNASGFRPYKRCLSEREVTSSLTLVASDEKKSQRARIC.

Positions Thr71–Ala125 constitute an HTH myb-type domain. The H-T-H motif DNA-binding region spans Trp98–Phe121. Residues Met124–Ser204 are disordered. The segment covering Arg145 to Pro155 has biased composition (basic residues). A compositionally biased stretch (pro residues) spans Arg156–Asn169. A compositionally biased stretch (polar residues) spans Lys178–Ser204.

It is found in the nucleus. In terms of biological role, transcription factor involved in phytochrome A-mediated cotyledon opening. Controlled by the central oscillator mediated by LHY and CCA1. Part of a regulatory circadian feedback loop. Regulates its own expression. In Arabidopsis thaliana (Mouse-ear cress), this protein is Protein REVEILLE 7 (RVE7).